Here is a 354-residue protein sequence, read N- to C-terminus: tRNA N6-adenosine threonylcarbamoyltransferase (354 aa).

A divalent metal cation contacts are provided by histidine 121, histidine 125, and tyrosine 142. Substrate is bound by residues 142-146 (YVSGG), aspartate 174, glycine 189, glutamate 193, and asparagine 285. An a divalent metal cation-binding site is contributed by aspartate 313.

The protein belongs to the KAE1 / TsaD family. In terms of assembly, component of the EKC/KEOPS complex composed of at least bud32, cgi121, gon7, kae1 and pcc1; the whole complex dimerizes. Requires a divalent metal cation as cofactor.

The protein resides in the cytoplasm. It localises to the nucleus. The catalysed reaction is L-threonylcarbamoyladenylate + adenosine(37) in tRNA = N(6)-L-threonylcarbamoyladenosine(37) in tRNA + AMP + H(+). Component of the EKC/KEOPS complex that is required for the formation of a threonylcarbamoyl group on adenosine at position 37 (t(6)A37) in tRNAs that read codons beginning with adenine. The complex is probably involved in the transfer of the threonylcarbamoyl moiety of threonylcarbamoyl-AMP (TC-AMP) to the N6 group of A37. Kae1 likely plays a direct catalytic role in this reaction, but requires other protein(s) of the complex to fulfill this activity. The EKC/KEOPS complex also promotes both telomere uncapping and telomere elongation. The complex is required for efficient recruitment of transcriptional coactivators. This is tRNA N6-adenosine threonylcarbamoyltransferase (gpe-1) from Neurospora crassa (strain ATCC 24698 / 74-OR23-1A / CBS 708.71 / DSM 1257 / FGSC 987).